The primary structure comprises 100 residues: Urease subunit gamma (100 aa).

It belongs to the urease gamma subunit family. In terms of assembly, heterotrimer of UreA (gamma), UreB (beta) and UreC (alpha) subunits. Three heterotrimers associate to form the active enzyme. The apoenzyme interacts with an accessory complex composed of UreD, UreF and UreG, which is required for the assembly of the nickel containing metallocenter of UreC. The UreE protein may also play a direct role as a metallochaperone in nickel transfer to the urease apoprotein.

The protein localises to the cytoplasm. It carries out the reaction urea + 2 H2O + H(+) = hydrogencarbonate + 2 NH4(+). It participates in nitrogen metabolism; urea degradation; CO(2) and NH(3) from urea (urease route): step 1/1. With respect to regulation, the apoenzyme can be activated in vitro in the presence of nickel ions and carbon dioxide, which promotes carbamylation of 'Lys-217' of the UreC (alpha) subunit. This chain is Urease subunit gamma, found in Klebsiella aerogenes (Enterobacter aerogenes).